A 438-amino-acid polypeptide reads, in one-letter code: Adenosylhomocysteinase (438 aa).

Thr64, Asp139, and Glu164 together coordinate substrate. Residue 165 to 167 participates in NAD(+) binding; it reads TTT. Residues Lys194 and Asp198 each coordinate substrate. NAD(+)-binding positions include Asn199, 228-233, Glu251, Asn286, 307-309, and Asn352; these read GYGDVG and IGH.

The protein belongs to the adenosylhomocysteinase family. NAD(+) serves as cofactor.

It localises to the cytoplasm. The catalysed reaction is S-adenosyl-L-homocysteine + H2O = L-homocysteine + adenosine. It functions in the pathway amino-acid biosynthesis; L-homocysteine biosynthesis; L-homocysteine from S-adenosyl-L-homocysteine: step 1/1. May play a key role in the regulation of the intracellular concentration of adenosylhomocysteine. The protein is Adenosylhomocysteinase of Coxiella burnetii (strain RSA 493 / Nine Mile phase I).